A 417-amino-acid polypeptide reads, in one-letter code: Serine hydroxymethyltransferase (417 aa).

Residues leucine 121 and 125-127 (GHL) contribute to the (6S)-5,6,7,8-tetrahydrofolate site. Lysine 230 is modified (N6-(pyridoxal phosphate)lysine). Residue 355-357 (SPF) coordinates (6S)-5,6,7,8-tetrahydrofolate.

Belongs to the SHMT family. Homodimer. Pyridoxal 5'-phosphate serves as cofactor.

The protein resides in the cytoplasm. It carries out the reaction (6R)-5,10-methylene-5,6,7,8-tetrahydrofolate + glycine + H2O = (6S)-5,6,7,8-tetrahydrofolate + L-serine. It functions in the pathway one-carbon metabolism; tetrahydrofolate interconversion. It participates in amino-acid biosynthesis; glycine biosynthesis; glycine from L-serine: step 1/1. Catalyzes the reversible interconversion of serine and glycine with tetrahydrofolate (THF) serving as the one-carbon carrier. This reaction serves as the major source of one-carbon groups required for the biosynthesis of purines, thymidylate, methionine, and other important biomolecules. Also exhibits THF-independent aldolase activity toward beta-hydroxyamino acids, producing glycine and aldehydes, via a retro-aldol mechanism. This Nitrosococcus oceani (strain ATCC 19707 / BCRC 17464 / JCM 30415 / NCIMB 11848 / C-107) protein is Serine hydroxymethyltransferase.